A 162-amino-acid polypeptide reads, in one-letter code: Flagellar assembly factor FliW (162 aa).

This sequence belongs to the FliW family. As to quaternary structure, interacts with translational regulator CsrA and flagellin(s).

Its subcellular location is the cytoplasm. Its function is as follows. Acts as an anti-CsrA protein, binds CsrA and prevents it from repressing translation of its target genes, one of which is flagellin. Binds to flagellin and participates in the assembly of the flagellum. The protein is Flagellar assembly factor FliW of Alkaliphilus metalliredigens (strain QYMF).